A 63-amino-acid chain; its full sequence is Large ribosomal subunit protein bL32c (63 aa).

The disordered stretch occupies residues 38-63; that stretch reads RSFSGVSEHPKPKGFSRQQTNNRVLG. The span at 53–63 shows a compositional bias: polar residues; the sequence is SRQQTNNRVLG.

Belongs to the bacterial ribosomal protein bL32 family.

The protein resides in the plastid. The protein localises to the chloroplast. The chain is Large ribosomal subunit protein bL32c (rpl32) from Oryza sativa (Rice).